Reading from the N-terminus, the 447-residue chain is MTRKLFGTDGVRGRANTYPMTAEIALRMGAAAGRYFRRDSSIAHRVVIGKDTRLSGYMIENALTAGLTSTGMNVLLLSPVPTPAVGLLTPSMRADLGIMISASHNPAEDNGIKLFGPDGFKLSDEVEAEIEALMASDIPLAPAAEIGRAKHVYDGLFRYIERVKSTFPTELRLDGLKVVVDCANGAAYRAAPEVLWELGADVVAMGVEPDGLNINLGCGSTKPEAAAAKIREVGAHVGICLDGDADRVVLIDETGQVADGDQIMALFAKRWADEGRLKGRTLAATVMSNLGLERFLADESIVLHRTAVGDRYVVEAMRAGGFNLGGEQSGHIVMTDYATTGDGLIAGLQFLAEMVRTGQSASTLAHNFETVPQVLKNVRFDVGAAPLDAPAVQAAIAAGEERLTGSGRLLIRKSGTEPLIRVMAEAEDEALMTAVVDDIVGAVEDAV.

Residue Ser-103 is the Phosphoserine intermediate of the active site. Mg(2+) contacts are provided by Ser-103, Asp-242, Asp-244, and Asp-246. Ser-103 bears the Phosphoserine mark.

It belongs to the phosphohexose mutase family. It depends on Mg(2+) as a cofactor. Activated by phosphorylation.

The catalysed reaction is alpha-D-glucosamine 1-phosphate = D-glucosamine 6-phosphate. Its function is as follows. Catalyzes the conversion of glucosamine-6-phosphate to glucosamine-1-phosphate. The chain is Phosphoglucosamine mutase from Jannaschia sp. (strain CCS1).